Here is a 77-residue protein sequence, read N- to C-terminus: uncharacterized protein (77 aa).

Residues 54 to 77 form a disordered region; the sequence is HHGRKHKEDMEARHEQLTKGGTIL. Residues 59–70 are compositionally biased toward basic and acidic residues; the sequence is HKEDMEARHEQL.

This is an uncharacterized protein from Escherichia coli O157:H7.